A 404-amino-acid polypeptide reads, in one-letter code: MSFRNSSRMAMKALRTMGSRRLATRSMSVMARTIAAPSMRFAPRMTAPLMQTRGMRVMDFAGTKENVWERSDWPREKLVDYFKNDTLAIIGYGSQGHGQGLNARDQGLNVIVGVRKDGASWKQAIEDGWVPGKTLFPVEEAIKKGSIIMNLLSDAAQTETWPKIAPLITKGKTLYFSHGFSVIFKDQTKIHPPKDVDVILVAPKGSGRTVRTLFKEGRGINSSFAVYQDVTGKAQEKAIGLAVAVGSGFIYQTTFKKEVISDLVGERGCLMGGINGLFLAQYQVLRERGHSPAEAFNETVEEATQSLYPLIGKYGLDYMFAACSTTARRGAIDWTPRFLEANKKVLNELYDNVENGNEAKRSLEYNSAPNYRELYDKELEEIRNLEIWKAGEVVRSLRPEHNKH.

The KARI N-terminal Rossmann domain maps to 63-253; that stretch reads TKENVWERSD…AVGSGFIYQT (191 aa). NADP(+) contacts are provided by residues 91–100, 115–120, and 153–157; these read GYGSQGHGQG, RKDGAS, and SDAAQ. The active site involves histidine 178. The 148-residue stretch at 254-401 folds into the KARI C-terminal knotted domain; it reads TFKKEVISDL…EVVRSLRPEH (148 aa). Serine 261 is modified (phosphoserine). Aspartate 262, glutamate 266, glutamate 298, and glutamate 302 together coordinate Mg(2+). Substrate is bound at residue serine 324.

Belongs to the ketol-acid reductoisomerase family. It depends on Mg(2+) as a cofactor.

The protein localises to the mitochondrion. The enzyme catalyses (2R)-2,3-dihydroxy-3-methylbutanoate + NADP(+) = (2S)-2-acetolactate + NADPH + H(+). It catalyses the reaction (2R,3R)-2,3-dihydroxy-3-methylpentanoate + NADP(+) = (S)-2-ethyl-2-hydroxy-3-oxobutanoate + NADPH + H(+). It functions in the pathway amino-acid biosynthesis; L-isoleucine biosynthesis; L-isoleucine from 2-oxobutanoate: step 2/4. The protein operates within amino-acid biosynthesis; L-valine biosynthesis; L-valine from pyruvate: step 2/4. This chain is Probable ketol-acid reductoisomerase, mitochondrial (ilv5), found in Schizosaccharomyces pombe (strain 972 / ATCC 24843) (Fission yeast).